Here is a 347-residue protein sequence, read N- to C-terminus: Probable E3 ubiquitin-protein ligase DTX3 (347 aa).

Positions 111–157 (GGEHPELHRPGPPPLRAAPLLPPGARGLPPPPPPLPPPLPPRLREDA) are disordered. Over residues 120-151 (PGPPPLRAAPLLPPGARGLPPPPPPLPPPLPP) the composition is skewed to pro residues. The segment at 164 to 205 (CPICLGEIQNAKTLEKCRHSFCEGCITRALQVKKACPMCGRF) adopts an RING-type zinc-finger fold.

Belongs to the Deltex family. Homodimer. May form a heterodimer with other members of the Deltex family. Interacts with NOTCH1. In terms of tissue distribution, strongly expressed in testis and brain. Weakly expressed in kidney.

Its subcellular location is the cytoplasm. The catalysed reaction is S-ubiquitinyl-[E2 ubiquitin-conjugating enzyme]-L-cysteine + [acceptor protein]-L-lysine = [E2 ubiquitin-conjugating enzyme]-L-cysteine + N(6)-ubiquitinyl-[acceptor protein]-L-lysine.. It functions in the pathway protein modification; protein ubiquitination. In terms of biological role, regulator of Notch signaling, a signaling pathway involved in cell-cell communications that regulates a broad spectrum of cell-fate determinations. Probably acts both as a positive and negative regulator of Notch, depending on the developmental and cell context. Functions as a ubiquitin ligase protein in vitro, suggesting that it may regulate the Notch pathway via some ubiquitin ligase activity. The chain is Probable E3 ubiquitin-protein ligase DTX3 (Dtx3) from Mus musculus (Mouse).